Here is a 444-residue protein sequence, read N- to C-terminus: NADH-dependent flavin oxidoreductase nadA (444 aa).

FMN contacts are provided by residues 37-40 and Gln123; that span reads ERMC. Residues 127 to 149 are disordered; it reads PGRQTPSHRQPEPISASDVPLDT. Position 192–195 (192–195) interacts with substrate; that stretch reads HAAH. Residue 345 to 346 participates in FMN binding; the sequence is AR.

The protein belongs to the NADH:flavin oxidoreductase/NADH oxidase family.

The protein resides in the cytoplasm. It localises to the cytosol. Functionally, NADH-dependent flavin oxidoreductase; part of the gene cluster that mediates the biosynthesis of aflatoxins, a group of polyketide-derived furanocoumarins, and part of the most toxic and carcinogenic compounds among the known mycotoxins. The four major aflatoxins produced by A.parasiticus are aflatoxin B1 (AFB1), aflatoxin B2 (AFB2), aflatoxin G1 (AFG1) and aflatoxin G2 (AFG2). Within the aflatoxin pathway, the NADH-dependent flavin oxidoreductase nadA is specifically required for the last steps in which OMST is converted specifically to aflatoxin G1. The biosynthesis of aflatoxins begins with the norsolorinic acid synthase aflC that combines a hexanoyl starter unit produced by the fatty acid synthase aflA/aflB and 7 malonyl-CoA extender units to synthesize the precursor NOR. The second step is the conversion of NOR to averantin and requires the norsolorinic acid ketoreductase aflD, which catalyzes the dehydration of norsolorinic acid to form (1'S)-averantin. The norsolorinic acid reductases aflE and aflF may also play a role in the conversion of NOR to AVN. The cytochrome P450 monooxygenase aflG then catalyzes the hydroxylation of AVN to 5'hydroxyaverantin (HAVN). The next step is performed by the 5'-hydroxyaverantin dehydrogenase aflH that transforms HAVN to 5'-oxoaverantin (OAVN) which is further converted to averufin (AVF) by aflK that plays a dual role in the pathway, as a 5'-oxoaverantin cyclase that mediates conversion of 5'-oxoaverantin, as well as a versicolorin B synthase in a later step in the pathway. The averufin oxidase aflI catalyzes the conversion of AVF to versiconal hemiacetal acetate (VHA). VHA is then the substrate for the versiconal hemiacetal acetate esterase aflJ to yield versiconal (VAL). Versicolorin B synthase aflK then converts VAL to versicolorin B (VERB) by closing the bisfuran ring of aflatoxin which is required for DNA-binding, thus giving to aflatoxin its activity as a mutagen. Then, the activity of the versicolorin B desaturase aflL leads to versicolorin A (VERA). A branch point starts from VERB since it can also be converted to dihydrodemethylsterigmatocystin (DMDHST), probably also by aflL, VERA being a precursor for aflatoxins B1 and G1, and DMDHST for aflatoxins B2 and G2. Next, the versicolorin reductase aflM and the cytochrome P450 monooxygenase aflN are involved in conversion of VERA to demethylsterigmatocystin (DMST). AflX and aflY seem also involved in this step, through probable aflX-mediated epoxide ring-opening step following versicolorin A oxidation and aflY-mediated Baeyer-Villiger oxidation required for the formation of the xanthone ring. The methyltransferase aflO then leads to the modification of DMST to sterigmatocystin (ST), and of DMDHST to dihydrosterigmatocystin (DHST). Both ST and DHST are then substrates of the O-methyltransferase aflP to yield O-methylsterigmatocystin (OMST) and dihydro-O-methylsterigmatocystin (DHOMST), respectively. Finally OMST is converted to aflatoxins B1 and G1, and DHOMST to aflatoxins B2 and G2, via the action of several enzymes including O-methylsterigmatocystin oxidoreductase aflQ, the cytochrome P450 monooxygenase aflU, but also the NADH-dependent flavin oxidoreductase nadA which is specifically required for the synthesis of AFG1. This chain is NADH-dependent flavin oxidoreductase nadA, found in Aspergillus parasiticus (strain ATCC 56775 / NRRL 5862 / SRRC 143 / SU-1).